The following is a 481-amino-acid chain: Alpha-ketoglutaric semialdehyde dehydrogenase 1 (481 aa).

Residues 154–155 (WN), 178–181 (KAPE), and 231–232 (GS) each bind NADP(+). Residue glutamate 253 is the Proton acceptor of the active site. An NADP(+)-binding site is contributed by leucine 254. Catalysis depends on cysteine 287, which acts as the Nucleophile. Glutamate 384 contacts NADP(+).

Belongs to the aldehyde dehydrogenase family. As to quaternary structure, homotetramer.

It catalyses the reaction 2,5-dioxopentanoate + NADP(+) + H2O = 2-oxoglutarate + NADPH + 2 H(+). The catalysed reaction is 2,5-dioxopentanoate + NAD(+) + H2O = 2-oxoglutarate + NADH + 2 H(+). It carries out the reaction succinate semialdehyde + NAD(+) + H2O = succinate + NADH + 2 H(+). Functionally, catalyzes the NAD(P)(+)-dependent oxidation of alpha-ketoglutaric semialdehyde (alphaKGSA) to alpha-ketoglutarate. Is involved in a degradation pathway of L-arabinose that allows A.brasilense to grow on L-arabinose as a sole carbon source. Prefers NAD(+) to NADP(+) as a cosubstrate. Displays broad substrate specificity: exhibits the highest activity with alphaKGSA and succinic semialdehyde as substrates, but to a lesser extent, is also active with glutaraldehyde, benzaldehyde, and a number of aldehydes from C3 to C8. The polypeptide is Alpha-ketoglutaric semialdehyde dehydrogenase 1 (araE) (Azospirillum brasilense).